A 1640-amino-acid chain; its full sequence is RING finger protein 17 (1640 aa).

The RING-type zinc-finger motif lies at 30–73; the sequence is CTRCGRKVSVASGDHHKFPCGHAFCELCLLAPQEYTTSKCTDCE. Ser134 bears the Phosphoserine mark. Lys229 carries the post-translational modification N6-acetyllysine. 2 disordered regions span residues 348 to 376 and 413 to 435; these read TDET…TKEM and DDPI…APVG. Over residues 360–373 the composition is skewed to basic and acidic residues; sequence APDRHLEGKKKQPT. 2 Tudor domains span residues 751 to 809 and 985 to 1044; these read CPLQ…FLEP and KWEC…LKTM. The segment covering 1170–1184 has biased composition (basic and acidic residues); it reads NEHKVPDSKGKKSES. Residues 1170–1191 are disordered; that stretch reads NEHKVPDSKGKKSESRSTGCYR. 2 Tudor domains span residues 1246 to 1303 and 1496 to 1556; these read SWKK…PDTP and DFSS…LMQY.

As to quaternary structure, interacts with MXD1, MXD3, MXD4, MXI1 and PIWIL1. Self-associates. In terms of tissue distribution, expressed at high levels in adult testis. Expressed in male germ cells (at protein level). Expressed at lower levels in adult thyroid, submaxillary gland, ovary and epididymis.

Its subcellular location is the cytoplasm. The protein localises to the nucleus. Functionally, seems to be involved in regulation of transcriptional activity of MYC. In vitro, inhibits DNA-binding activity of Mad-MAX heterodimers. Can recruit Mad transcriptional repressors (MXD1, MXD3, MXD4 and MXI1) to the cytoplasm. May be involved in spermiogenesis. This chain is RING finger protein 17 (Rnf17), found in Mus musculus (Mouse).